A 111-amino-acid polypeptide reads, in one-letter code: Cytochrome c (111 aa).

An N-acetylalanine modification is found at Ala-1. 3 residues coordinate heme c: Cys-22, Cys-25, and His-26. Lys-80 is subject to N6,N6,N6-trimethyllysine. Residue Met-88 coordinates heme c. Lys-94 bears the N6,N6,N6-trimethyllysine mark.

It belongs to the cytochrome c family. Post-translationally, binds 1 heme c group covalently per subunit.

Its subcellular location is the mitochondrion intermembrane space. Electron carrier protein. The oxidized form of the cytochrome c heme group can accept an electron from the heme group of the cytochrome c1 subunit of cytochrome reductase. Cytochrome c then transfers this electron to the cytochrome oxidase complex, the final protein carrier in the mitochondrial electron-transport chain. In Vigna radiata var. radiata (Mung bean), this protein is Cytochrome c.